The following is a 385-amino-acid chain: Citrate synthase (385 aa).

Residues histidine 223, histidine 263, and aspartate 318 contribute to the active site.

Belongs to the citrate synthase family. As to quaternary structure, homodimer.

The enzyme catalyses oxaloacetate + acetyl-CoA + H2O = citrate + CoA + H(+). It functions in the pathway carbohydrate metabolism; tricarboxylic acid cycle; isocitrate from oxaloacetate: step 1/2. Allosterically inhibited by NADH. The polypeptide is Citrate synthase (gltA) (Thermoplasma acidophilum (strain ATCC 25905 / DSM 1728 / JCM 9062 / NBRC 15155 / AMRC-C165)).